The following is a 282-amino-acid chain: Probable endonuclease 4 (282 aa).

Zn(2+)-binding residues include H69, H109, E144, D178, H181, H215, D228, H230, and E260.

Belongs to the AP endonuclease 2 family. Zn(2+) is required as a cofactor.

It carries out the reaction Endonucleolytic cleavage to 5'-phosphooligonucleotide end-products.. Functionally, endonuclease IV plays a role in DNA repair. It cleaves phosphodiester bonds at apurinic or apyrimidinic (AP) sites, generating a 3'-hydroxyl group and a 5'-terminal sugar phosphate. This Thermosipho africanus (strain TCF52B) protein is Probable endonuclease 4.